The primary structure comprises 89 residues: Small ribosomal subunit protein uS15 (89 aa).

The protein belongs to the universal ribosomal protein uS15 family. In terms of assembly, part of the 30S ribosomal subunit. Forms a bridge to the 50S subunit in the 70S ribosome, contacting the 23S rRNA.

One of the primary rRNA binding proteins, it binds directly to 16S rRNA where it helps nucleate assembly of the platform of the 30S subunit by binding and bridging several RNA helices of the 16S rRNA. Its function is as follows. Forms an intersubunit bridge (bridge B4) with the 23S rRNA of the 50S subunit in the ribosome. This chain is Small ribosomal subunit protein uS15, found in Kineococcus radiotolerans (strain ATCC BAA-149 / DSM 14245 / SRS30216).